The chain runs to 286 residues: ATP synthase gamma chain (286 aa).

It belongs to the ATPase gamma chain family. F-type ATPases have 2 components, CF(1) - the catalytic core - and CF(0) - the membrane proton channel. CF(1) has five subunits: alpha(3), beta(3), gamma(1), delta(1), epsilon(1). CF(0) has three main subunits: a, b and c.

The protein localises to the cell inner membrane. Functionally, produces ATP from ADP in the presence of a proton gradient across the membrane. The gamma chain is believed to be important in regulating ATPase activity and the flow of protons through the CF(0) complex. This Shewanella denitrificans (strain OS217 / ATCC BAA-1090 / DSM 15013) protein is ATP synthase gamma chain.